A 90-amino-acid polypeptide reads, in one-letter code: Small ribosomal subunit protein mS37 (90 aa).

Cys-27 and Cys-58 are disulfide-bonded.

Belongs to the mitochondrion-specific ribosomal protein mS37 family. Component of the mitochondrial small ribosomal subunit (mt-SSU). Mature N.crassa 74S mitochondrial ribosomes consist of a small (37S) and a large (54S) subunit. The 37S small subunit contains a 16S ribosomal RNA (16S mt-rRNA) and 32 different proteins. The 54S large subunit contains a 23S rRNA (23S mt-rRNA) and 42 different proteins.

Its subcellular location is the mitochondrion. Its function is as follows. Component of the mitochondrial ribosome (mitoribosome), a dedicated translation machinery responsible for the synthesis of mitochondrial genome-encoded proteins, including at least some of the essential transmembrane subunits of the mitochondrial respiratory chain. The mitoribosomes are attached to the mitochondrial inner membrane and translation products are cotranslationally integrated into the membrane. In Neurospora crassa (strain ATCC 24698 / 74-OR23-1A / CBS 708.71 / DSM 1257 / FGSC 987), this protein is Small ribosomal subunit protein mS37 (mrp10).